The primary structure comprises 415 residues: 6-phospho-beta-glucosidase BglT (415 aa).

Residue Met1–Thr64 participates in NAD(+) binding. Substrate contacts are provided by Arg87 and Asn140. Residue Cys162 coordinates Mn(2+). Asn163 serves as a coordination point for substrate. His192 provides a ligand contact to Mn(2+). The active-site Proton acceptor is the Tyr241. Arg261 is a substrate binding site.

The protein belongs to the glycosyl hydrolase 4 family. Homodimer or homotetramer. Exists in a homodimer/homotetramer equilibrium state in solution. NAD(+) serves as cofactor. Requires Mn(2+) as cofactor.

It carries out the reaction 6-phospho-beta-D-glucosyl-(1-&gt;4)-D-glucose + H2O = D-glucose 6-phosphate + D-glucose. Hydrolyzes cellobiose 6'-phosphate into glucose 6-phosphate (Glc6P) and glucose. The protein is 6-phospho-beta-glucosidase BglT (bglT) of Thermotoga maritima (strain ATCC 43589 / DSM 3109 / JCM 10099 / NBRC 100826 / MSB8).